Consider the following 1202-residue polypeptide: Protein HASTY 1 (1202 aa).

An N-acetylmethionine modification is found at Met-1.

It belongs to the exportin family. Interacts with RAN1. As to expression, expressed in roots, leaves and floral buds.

The protein localises to the nucleus. In terms of biological role, nucleocytoplasmic transporter involved in the nuclear export of microRNAs (miRNAs). Required for several miRNAs accumulation. Specifically required for miR156 accumulation which targets SPL3, SPL4 and SPL5 transcription factors. Involved in plant development through its role in miRNAs processing. Required for vegetative phase change and vegetative to reproductive phase transition. Functionally dependent on RAN1 binding. Does not seem to be involved in small interfering RNAs (siRNAs) processing. The protein is Protein HASTY 1 (HST1) of Arabidopsis thaliana (Mouse-ear cress).